The sequence spans 255 residues: Spindle pole component 29 (255 aa).

Residues 1-12 (MDYSNFGNSASK) show a composition bias toward polar residues. 3 disordered regions span residues 1–20 (MDYSNFGNSASKKFQDDTLN), 31–123 (KKLR…SSPV), and 210–231 (DMPYRRSSDNINKEGAREDRSS). Thr18 carries the post-translational modification Phosphothreonine. Position 65 is a phosphoserine (Ser65). Composition is skewed to basic and acidic residues over residues 69–91 (KSDDRKVKSPLDDKLRRQLREGN) and 211–231 (MPYRRSSDNINKEGAREDRSS). Residue Thr240 is modified to Phosphothreonine; by MPS1.

Belongs to the SPC29 family. Component of the SPC110 complex containing at least CMD1, SPC29, SPC42 and SCP110. Interacts with BBP1. Post-translationally, MPS1-mediated phosphorylation at Thr-240 is required for spindle pole body duplication.

The protein localises to the nucleus. The protein resides in the cytoplasm. It localises to the cytoskeleton. Its subcellular location is the microtubule organizing center. It is found in the spindle pole body. Functionally, component of the spindle pole body (SPB) required for the proper execution of spindle pole body (SPB) duplication. Links the central plaque component SPC42 to the inner plaque component SPC110. The chain is Spindle pole component 29 (SPC29) from Saccharomyces cerevisiae (strain AWRI796) (Baker's yeast).